The following is a 445-amino-acid chain: Tubulin beta chain (445 aa).

Residues glutamine 11, glutamate 69, serine 138, glycine 142, threonine 143, glycine 144, asparagine 204, and asparagine 226 each coordinate GTP. Residue glutamate 69 participates in Mg(2+) binding.

It belongs to the tubulin family. As to quaternary structure, dimer of alpha and beta chains. A typical microtubule is a hollow water-filled tube with an outer diameter of 25 nm and an inner diameter of 15 nM. Alpha-beta heterodimers associate head-to-tail to form protofilaments running lengthwise along the microtubule wall with the beta-tubulin subunit facing the microtubule plus end conferring a structural polarity. Microtubules usually have 13 protofilaments but different protofilament numbers can be found in some organisms and specialized cells. It depends on Mg(2+) as a cofactor.

Its subcellular location is the cytoplasm. The protein localises to the cytoskeleton. In terms of biological role, tubulin is the major constituent of microtubules, a cylinder consisting of laterally associated linear protofilaments composed of alpha- and beta-tubulin heterodimers. Microtubules grow by the addition of GTP-tubulin dimers to the microtubule end, where a stabilizing cap forms. Below the cap, tubulin dimers are in GDP-bound state, owing to GTPase activity of alpha-tubulin. The polypeptide is Tubulin beta chain (Coprinopsis cinerea (strain Okayama-7 / 130 / ATCC MYA-4618 / FGSC 9003) (Inky cap fungus)).